We begin with the raw amino-acid sequence, 133 residues long: Large-conductance mechanosensitive channel (133 aa).

The next 2 helical transmembrane spans lie at 19-39 and 79-99; these read IDLAVGVVIGGAFGKIVTSLV and IQSVVDFIIISFSIFLFVKLI.

The protein belongs to the MscL family. In terms of assembly, homopentamer.

It is found in the cell membrane. In terms of biological role, channel that opens in response to stretch forces in the membrane lipid bilayer. May participate in the regulation of osmotic pressure changes within the cell. This is Large-conductance mechanosensitive channel from Clostridium tetani (strain Massachusetts / E88).